Here is a 298-residue protein sequence, read N- to C-terminus: Pheromone-regulated membrane protein 9 (298 aa).

Residues 1–111 are Cytoplasmic-facing; the sequence is MSPQYHFYFV…YWIYEVTRHK (111 aa). A helical membrane pass occupies residues 112–132; the sequence is AAVILLVLIVTSILLLVFFYN. At 133 to 137 the chain is on the extracellular side; sequence TEFCV. The chain crosses the membrane as a helical span at residues 138 to 158; that stretch reads AFEILLFSFCFPGTCMVVIAF. At 159-298 the chain is on the cytoplasmic side; it reads SEPIGDREFK…QEYPGVDEFF (140 aa). The segment at 235-262 is disordered; it reads SSASNVKDAQSNDETAGTPNEAAESSSF. A COPII binding region spans residues 297 to 298; the sequence is FF.

Belongs to the DUP/COS family. Interacts with PRM8. Binds to COPII coated vesicles.

It is found in the cell membrane. Its function is as follows. May be involved in endoplasmic reticulum exit trafficking of proteins. In Saccharomyces cerevisiae (strain ATCC 204508 / S288c) (Baker's yeast), this protein is Pheromone-regulated membrane protein 9 (PRM9).